The following is a 199-amino-acid chain: Recombination protein RecR (199 aa).

A C4-type zinc finger spans residues 58–73; sequence CKTCGNIDTQSPCTVC. The region spanning 81 to 176 is the Toprim domain; sequence AMIVVVADVA…KVTRLAHGVP (96 aa).

This sequence belongs to the RecR family.

May play a role in DNA repair. It seems to be involved in an RecBC-independent recombinational process of DNA repair. It may act with RecF and RecO. The protein is Recombination protein RecR of Bradyrhizobium sp. (strain BTAi1 / ATCC BAA-1182).